The sequence spans 327 residues: Methionyl-tRNA formyltransferase (327 aa).

Residue 121-124 (SLLP) participates in (6S)-5,6,7,8-tetrahydrofolate binding.

It belongs to the Fmt family.

It carries out the reaction L-methionyl-tRNA(fMet) + (6R)-10-formyltetrahydrofolate = N-formyl-L-methionyl-tRNA(fMet) + (6S)-5,6,7,8-tetrahydrofolate + H(+). Attaches a formyl group to the free amino group of methionyl-tRNA(fMet). The formyl group appears to play a dual role in the initiator identity of N-formylmethionyl-tRNA by promoting its recognition by IF2 and preventing the misappropriation of this tRNA by the elongation apparatus. The polypeptide is Methionyl-tRNA formyltransferase (Burkholderia pseudomallei (strain K96243)).